A 239-amino-acid chain; its full sequence is Ditrans,polycis-undecaprenyl-diphosphate synthase ((2E,6E)-farnesyl-diphosphate specific) (239 aa).

Residue Asp-18 is part of the active site. Residue Asp-18 participates in Mg(2+) binding. Substrate contacts are provided by residues 19-22 (GNGR), Trp-23, Arg-31, His-35, and 63-65 (SSE). Asn-66 serves as the catalytic Proton acceptor. Residues Trp-67, Arg-69, Arg-186, and 192–194 (RIS) each bind substrate. Glu-205 is a Mg(2+) binding site.

Belongs to the UPP synthase family. As to quaternary structure, homodimer. It depends on Mg(2+) as a cofactor.

The enzyme catalyses 8 isopentenyl diphosphate + (2E,6E)-farnesyl diphosphate = di-trans,octa-cis-undecaprenyl diphosphate + 8 diphosphate. Functionally, catalyzes the sequential condensation of isopentenyl diphosphate (IPP) with (2E,6E)-farnesyl diphosphate (E,E-FPP) to yield (2Z,6Z,10Z,14Z,18Z,22Z,26Z,30Z,34E,38E)-undecaprenyl diphosphate (di-trans,octa-cis-UPP). UPP is the precursor of glycosyl carrier lipid in the biosynthesis of bacterial cell wall polysaccharide components such as peptidoglycan and lipopolysaccharide. The protein is Ditrans,polycis-undecaprenyl-diphosphate synthase ((2E,6E)-farnesyl-diphosphate specific) of Haemophilus influenzae (strain ATCC 51907 / DSM 11121 / KW20 / Rd).